A 452-amino-acid polypeptide reads, in one-letter code: MESNQKCGATQIVNEFCESIEGIVFRKGSEEYKQNVNKRWNIDVVNTPLLIVYPKNIQDVVKAVNFSRECQLDFAVIAGAHGFKSTCDNGLLLNISSMKNIKVDEASKTVVVETGCTLGDLDKETSKFGLGIPSGHVSHTGLGGLTLGGGIGHLSRSLGLTSDNLIGCTLVNYKGEIEKVTDQSNKELIYAIRGAGSNFGVITDFTFKLHPVKDVYLGTFVYPHATSKEPLTLLGEYASSKDVPNELSCAISITPEGVVVMAIYNGTEEQGKPYIEKIASFGVPVVSKISMIPYVQLQCLIDNKVPHGLKYYQRGPFIKEALNADMIEIILDAYNKHPTKSCAILLTHLGGKVREPVEDDFSSFAHRNSEYQIIFASIIPSDQDKPSIKQWTADVHTKLMPYCFGDYSNTTDGTQPIEIIYGKHTNKLIQLKTKYDPLNFFKNNTNIKPIQN.

The 169-residue stretch at 44 to 212 (VVNTPLLIVY…TDFTFKLHPV (169 aa)) folds into the FAD-binding PCMH-type domain. His81 carries the pros-8alpha-FAD histidine modification.

Belongs to the oxygen-dependent FAD-linked oxidoreductase family. FAD is required as a cofactor.

The sequence is that of FAD-linked oxidoreductase DDB_G0289697 from Dictyostelium discoideum (Social amoeba).